Reading from the N-terminus, the 132-residue chain is MTRTDTHAPLSQDALARLAGVIESRKPANGGDPDKSYVARLLHKGPDAFLKKVGEEATEVVMAAKDLDHGADKAKLVYEVADLWFHSMIALAHYGLAPADVIAELERREGISGIEEKALRKAAARSSEEGGA.

It belongs to the PRA-PH family.

It localises to the cytoplasm. The enzyme catalyses 1-(5-phospho-beta-D-ribosyl)-ATP + H2O = 1-(5-phospho-beta-D-ribosyl)-5'-AMP + diphosphate + H(+). Its pathway is amino-acid biosynthesis; L-histidine biosynthesis; L-histidine from 5-phospho-alpha-D-ribose 1-diphosphate: step 2/9. The protein is Phosphoribosyl-ATP pyrophosphatase of Acidovorax sp. (strain JS42).